We begin with the raw amino-acid sequence, 337 residues long: Anthranilate phosphoribosyltransferase (337 aa).

5-phospho-alpha-D-ribose 1-diphosphate is bound by residues Gly81, 84-85 (GD), Ser89, 91-94 (NVST), 109-117 (KHGNRALSS), and Ala121. Gly81 provides a ligand contact to anthranilate. Ser93 lines the Mg(2+) pocket. An anthranilate-binding site is contributed by Asn112. An anthranilate-binding site is contributed by Arg167. 2 residues coordinate Mg(2+): Asp226 and Glu227.

This sequence belongs to the anthranilate phosphoribosyltransferase family. As to quaternary structure, homodimer. It depends on Mg(2+) as a cofactor.

The catalysed reaction is N-(5-phospho-beta-D-ribosyl)anthranilate + diphosphate = 5-phospho-alpha-D-ribose 1-diphosphate + anthranilate. It participates in amino-acid biosynthesis; L-tryptophan biosynthesis; L-tryptophan from chorismate: step 2/5. In terms of biological role, catalyzes the transfer of the phosphoribosyl group of 5-phosphorylribose-1-pyrophosphate (PRPP) to anthranilate to yield N-(5'-phosphoribosyl)-anthranilate (PRA). The protein is Anthranilate phosphoribosyltransferase of Bradyrhizobium diazoefficiens (strain JCM 10833 / BCRC 13528 / IAM 13628 / NBRC 14792 / USDA 110).